The sequence spans 159 residues: Eukaryotic translation initiation factor 5A-3 (159 aa).

Over residues 1 to 12 (MSDEEHQFESKA) the composition is skewed to basic and acidic residues. Residues 1–21 (MSDEEHQFESKADAGASKTYP) are disordered. The residue at position 52 (Lys52) is a Hypusine.

This sequence belongs to the eIF-5A family. Post-translationally, lys-52 undergoes hypusination, a unique post-translational modification that consists in the addition of a butylamino group from spermidine to lysine side chain, leading to the formation of the unusual amino acid hypusine. eIF-5As are the only known proteins to undergo this modification, which is essential for their function.

Its function is as follows. Translation factor that promotes translation elongation and termination, particularly upon ribosome stalling at specific amino acid sequence contexts. Binds between the exit (E) and peptidyl (P) site of the ribosome and promotes rescue of stalled ribosome: specifically required for efficient translation of polyproline-containing peptides as well as other motifs that stall the ribosome. Acts as a ribosome quality control (RQC) cofactor by joining the RQC complex to facilitate peptidyl transfer during CAT tailing step. In Solanum lycopersicum (Tomato), this protein is Eukaryotic translation initiation factor 5A-3.